We begin with the raw amino-acid sequence, 103 residues long: Large ribosomal subunit protein mL63 (103 aa).

The protein belongs to the mitochondrion-specific ribosomal protein mL63 family.

The protein resides in the mitochondrion. The sequence is that of Large ribosomal subunit protein mL63 (mrpl57) from Danio rerio (Zebrafish).